A 404-amino-acid polypeptide reads, in one-letter code: G-protein coupled receptor 182 (404 aa).

Over 1–57 the chain is Extracellular; sequence MSVKPSWGPGPSEGVTAVPTSDLGEIHNWTELLDLFNHTLSECHVELSQSTKRVVLF. 2 N-linked (GlcNAc...) asparagine glycosylation sites follow: Asn28 and Asn37. A helical membrane pass occupies residues 58 to 79; that stretch reads ALYLAMFVVGLVENLLVICVNW. Residues 80–90 lie on the Cytoplasmic side of the membrane; sequence RGSGRAGLMNL. Residues 91–113 traverse the membrane as a helical segment; that stretch reads YILNMAIADLGIVLSLPVWMLEV. Over 114 to 127 the chain is Extracellular; sequence TLDYTWLWGSFSCR. Cysteines 126 and 202 form a disulfide. The chain crosses the membrane as a helical span at residues 128-149; sequence FTHYFYFVNMYSSIFFLVCLSV. Topologically, residues 150 to 170 are cytoplasmic; it reads DRYVTLTSASPSWQRYQHRVR. The helical transmembrane segment at 171–193 threads the bilayer; that stretch reads RAMCAGIWVLSAIIPLPEVVHIQ. Topologically, residues 194–217 are extracellular; it reads LVEGPEPMCLFMAPFETYSTWALA. The helical transmembrane segment at 218–239 threads the bilayer; that stretch reads VALSTTILGFLLPFPLITVFNV. Topologically, residues 240 to 258 are cytoplasmic; it reads LTACRLRQPGQPKSRRHCL. The helical transmembrane segment at 259–280 threads the bilayer; that stretch reads LLCAYVAVFVMCWLPYHVTLLL. Topologically, residues 281-299 are extracellular; the sequence is LTLHGTHISLHCHLVHLLY. Residues 300–320 form a helical membrane-spanning segment; that stretch reads FFYDVIDCFSMLHCVINPILY. Over 321-404 the chain is Cytoplasmic; it reads NFLSPHFRGR…ISPTQPLTPS (84 aa).

Belongs to the G-protein coupled receptor 1 family. As to expression, highly expressed in heart, skeletal muscle, immune system, adrenal gland and liver.

It localises to the cell membrane. Orphan receptor. This Homo sapiens (Human) protein is G-protein coupled receptor 182 (GPR182).